The sequence spans 215 residues: MGEAAVPPELDTFPAAKMAQTNPLPVPMGPWKITVYDQENFQGKRMEFTSACPNIMECGFDNIRSLKVECGAWVGYEHTGFCGQQFILERGEYPRWDAWSGSNAYHIERLMSFRPVCSANHKESKITVYEKDNFIGRQWEISDDYPSLQAMGWANNEVGSMKIPCGAWVCYQYPGYRGYQYVLEADHHGGDYKHWREWGSHAQTSQIQSIRRIQQ.

The segment at M1 to P30 is N-terminal arm. 2 Beta/gamma crystallin 'Greek key' domains span residues W31–C70 and G71–C117. The interval S118–E123 is connecting peptide. Beta/gamma crystallin 'Greek key' domains are found at residues S124–C165 and G166–Q214.

It belongs to the beta/gamma-crystallin family. Homo/heterodimer, or complexes of higher-order. The structure of beta-crystallin oligomers seems to be stabilized through interactions between the N-terminal arms.

Its function is as follows. Crystallins are the dominant structural components of the vertebrate eye lens. In Gallus gallus (Chicken), this protein is Beta-crystallin A3 (CRYBA1).